Here is a 573-residue protein sequence, read N- to C-terminus: Proline--tRNA ligase (573 aa).

This sequence belongs to the class-II aminoacyl-tRNA synthetase family. ProS type 1 subfamily. In terms of assembly, homodimer.

It localises to the cytoplasm. It catalyses the reaction tRNA(Pro) + L-proline + ATP = L-prolyl-tRNA(Pro) + AMP + diphosphate. Its function is as follows. Catalyzes the attachment of proline to tRNA(Pro) in a two-step reaction: proline is first activated by ATP to form Pro-AMP and then transferred to the acceptor end of tRNA(Pro). As ProRS can inadvertently accommodate and process non-cognate amino acids such as alanine and cysteine, to avoid such errors it has two additional distinct editing activities against alanine. One activity is designated as 'pretransfer' editing and involves the tRNA(Pro)-independent hydrolysis of activated Ala-AMP. The other activity is designated 'posttransfer' editing and involves deacylation of mischarged Ala-tRNA(Pro). The misacylated Cys-tRNA(Pro) is not edited by ProRS. This is Proline--tRNA ligase from Limosilactobacillus fermentum (strain NBRC 3956 / LMG 18251) (Lactobacillus fermentum).